A 560-amino-acid polypeptide reads, in one-letter code: Ubiquitin carboxyl-terminal hydrolase MINDY-3 homolog (560 aa).

The segment covering 1–13 (MNEKIVREQRGGE) has biased composition (basic and acidic residues). Disordered regions lie at residues 1-30 (MNEKIVREQRGGEDSPSSVSAKSATAAASA) and 44-91 (SHKT…MLNA). Low complexity-rich tracts occupy residues 15–30 (SPSSVSAKSATAAASA) and 52–81 (TASSSPRTSGASASASSSSRSASAPASSSS). Cys139 acts as the Nucleophile in catalysis. The interval 203–237 (TEAGSTKKRSPAGEEESALAGQAAGSSEEVEEAAE) is disordered. 2 positions are modified to phosphoserine: Ser212 and Ser219. Catalysis depends on His403, which acts as the Proton acceptor.

This sequence belongs to the MINDY deubiquitinase family. FAM188 subfamily.

It catalyses the reaction Thiol-dependent hydrolysis of ester, thioester, amide, peptide and isopeptide bonds formed by the C-terminal Gly of ubiquitin (a 76-residue protein attached to proteins as an intracellular targeting signal).. In terms of biological role, hydrolase that can remove 'Lys-48'-linked conjugated ubiquitin from proteins. The protein is Ubiquitin carboxyl-terminal hydrolase MINDY-3 homolog (mindy3) of Drosophila melanogaster (Fruit fly).